The following is a 226-amino-acid chain: Glutathione peroxidase 3 (226 aa).

Residues 1–24 (MARILRASCLLSLLLAGFVPPGRG) form the signal peptide. Residue U73 is part of the active site. U73 is a non-standard amino acid (selenocysteine).

This sequence belongs to the glutathione peroxidase family. In terms of assembly, homotetramer. Secreted in plasma.

The protein resides in the secreted. It carries out the reaction 2 glutathione + H2O2 = glutathione disulfide + 2 H2O. The catalysed reaction is tert-butyl hydroperoxide + 2 glutathione = tert-butanol + glutathione disulfide + H2O. Functionally, protects cells and enzymes from oxidative damage, by catalyzing the reduction of hydrogen peroxide, lipid peroxides and organic hydroperoxide, by glutathione. The sequence is that of Glutathione peroxidase 3 from Rattus norvegicus (Rat).